The sequence spans 469 residues: E3 ubiquitin-protein ligase pellino homolog 3 (469 aa).

The segment at 1-39 (MVLEGNPEVGSPRTSDLQHRGNKGSCVLSSPGEDAQPGE) is disordered. Phosphoserine is present on Ser-11.

This sequence belongs to the pellino family. In terms of assembly, interacts with TRAF6, MAP3K14 and MAP3K7. Post-translationally, phosphorylated by IRAK1 enhancing its E3 ligase activity. Highly expressed in brain, heart and testis, and at lower level in kidney, liver, lung, placenta, small intestine, spleen and stomach. Isoform 1 is not expressed in lung.

The enzyme catalyses S-ubiquitinyl-[E2 ubiquitin-conjugating enzyme]-L-cysteine + [acceptor protein]-L-lysine = [E2 ubiquitin-conjugating enzyme]-L-cysteine + N(6)-ubiquitinyl-[acceptor protein]-L-lysine.. It participates in protein modification; protein ubiquitination. Functionally, E3 ubiquitin ligase catalyzing the covalent attachment of ubiquitin moieties onto substrate proteins. Involved in the TLR and IL-1 signaling pathways via interaction with the complex containing IRAK kinases and TRAF6. Mediates 'Lys-63'-linked polyubiquitination of IRAK1. Can activate AP1/JUN and ELK1. Acts as a regulator of innate immunity by mediating 'Lys-63'-linked polyubiquitination of RIPK2 downstream of NOD1 and NOD2, thereby transforming RIPK2 into a scaffolding protein for downstream effectors, ultimately leading to activation of the NF-kappa-B and MAP kinases signaling. Catalyzes 'Lys-63'-linked polyubiquitination of RIPK2 in parallel of XIAP. This is E3 ubiquitin-protein ligase pellino homolog 3 from Homo sapiens (Human).